The chain runs to 191 residues: Ribosome hibernation promotion factor (191 aa).

Residues 100–123 (KQRQEGRPEPLPGPAEAEVNAQGS) are disordered.

The protein belongs to the HPF/YfiA ribosome-associated protein family. Long HPF subfamily. Interacts with 100S ribosomes.

The protein resides in the cytoplasm. Its function is as follows. Required for dimerization of active 70S ribosomes into 100S ribosomes in stationary phase; 100S ribosomes are translationally inactive and sometimes present during exponential growth. In Deinococcus radiodurans (strain ATCC 13939 / DSM 20539 / JCM 16871 / CCUG 27074 / LMG 4051 / NBRC 15346 / NCIMB 9279 / VKM B-1422 / R1), this protein is Ribosome hibernation promotion factor.